Reading from the N-terminus, the 210-residue chain is Large ribosomal subunit protein uL4 (210 aa).

It belongs to the universal ribosomal protein uL4 family. Part of the 50S ribosomal subunit.

Functionally, one of the primary rRNA binding proteins, this protein initially binds near the 5'-end of the 23S rRNA. It is important during the early stages of 50S assembly. It makes multiple contacts with different domains of the 23S rRNA in the assembled 50S subunit and ribosome. Its function is as follows. Forms part of the polypeptide exit tunnel. This chain is Large ribosomal subunit protein uL4, found in Orientia tsutsugamushi (strain Boryong) (Rickettsia tsutsugamushi).